Here is a 183-residue protein sequence, read N- to C-terminus: Large ribosomal subunit protein uL6 (183 aa).

It belongs to the universal ribosomal protein uL6 family. Part of the 50S ribosomal subunit.

Functionally, this protein binds to the 23S rRNA, and is important in its secondary structure. It is located near the subunit interface in the base of the L7/L12 stalk, and near the tRNA binding site of the peptidyltransferase center. In Malacoplasma penetrans (strain HF-2) (Mycoplasma penetrans), this protein is Large ribosomal subunit protein uL6.